The primary structure comprises 270 residues: Glutamate racemase (270 aa).

Residues 7 to 8 and 39 to 40 contribute to the substrate site; these read DS and YG. Cysteine 70 (proton donor/acceptor) is an active-site residue. Residue 71–72 coordinates substrate; it reads NT. Cysteine 194 (proton donor/acceptor) is an active-site residue. 195–196 lines the substrate pocket; that stretch reads TH.

The protein belongs to the aspartate/glutamate racemases family.

The enzyme catalyses L-glutamate = D-glutamate. It functions in the pathway cell wall biogenesis; peptidoglycan biosynthesis. In terms of biological role, provides the (R)-glutamate required for cell wall biosynthesis. This chain is Glutamate racemase, found in Cereibacter sphaeroides (strain ATCC 17023 / DSM 158 / JCM 6121 / CCUG 31486 / LMG 2827 / NBRC 12203 / NCIMB 8253 / ATH 2.4.1.) (Rhodobacter sphaeroides).